Reading from the N-terminus, the 559-residue chain is Podocan-like protein 1 (559 aa).

An N-terminal signal peptide occupies residues 1–20; sequence MRPQELLLLLLMLKWSLAHT. The N-linked (GlcNAc...) asparagine glycan is linked to asparagine 64. LRR repeat units follow at residues 66–89, 90–115, 117–139, 140–160, 161–186, 188–208, 209–231, 233–257, 258–281, 283–302, 303–328, 329–352, 354–373, 374–399, 400–423, 425–444, 445–470, 471–494, 496–515, and 517–541; these read TRAARHLSLQNNQLRELPYNELSR, LSGLRTLDLHSNLITSEGLPDEAFES, NQLENFYVAHNKLSVAPQFLPRS, LRVADLAANEVVEIFPLTFGE, KPALRSVYLHNNRLRNTGLPPNTFHG, EVITTLSLSSNQLSYLPPSLP, ASLERLHLQNNLISKVPRGALSL, THLRELYLQHNQLTDSGLDATTFSK, LSSLEYLDLSHNQLATVPEGLPGT, TILHLGRNCIRHVEAVRLHK, ARGLRYLLLQHNKLGASALPKGTLRP, LRALHTLHLYGNKLERVPPALPRH, QALVMPHNHVAALGARDLVS, ARALAELNLAYNSLASAHVHPSAFRR, LRALRSLDLAGNQLTRLPEGLPAS, RSLRLQRNQLRTLEPEQLAG, LNKLRELNLAHNRLRVGDIGPGTWHE, LQALKVLDLSHNELSFVPPDLPEA, EELYLQANRISHVGPEAFLS, and PHLRALFLRANRLHMTSIRAEALQG.

It belongs to the small leucine-rich proteoglycan (SLRP) family. SLRP class V subfamily. Post-translationally, N-glycosylated. As to expression, detected in bone where it is expressed in osteoblasts and newly formed bone matrix (at protein level). Also expressed weakly in osteoclasts (at protein level). Expressed strongly in calvaria, lung and femur, and weakly in kidney.

The protein localises to the secreted. Its subcellular location is the extracellular space. It localises to the extracellular matrix. This chain is Podocan-like protein 1, found in Mus musculus (Mouse).